A 340-amino-acid chain; its full sequence is Putative RRN3-like protein RRN3P2 (340 aa).

It belongs to the RRN3 family.

The polypeptide is Putative RRN3-like protein RRN3P2 (RRN3P2) (Homo sapiens (Human)).